Here is a 600-residue protein sequence, read N- to C-terminus: Proline--tRNA ligase (600 aa).

It belongs to the class-II aminoacyl-tRNA synthetase family. ProS type 1 subfamily. As to quaternary structure, homodimer.

The protein resides in the cytoplasm. It catalyses the reaction tRNA(Pro) + L-proline + ATP = L-prolyl-tRNA(Pro) + AMP + diphosphate. Its function is as follows. Catalyzes the attachment of proline to tRNA(Pro) in a two-step reaction: proline is first activated by ATP to form Pro-AMP and then transferred to the acceptor end of tRNA(Pro). As ProRS can inadvertently accommodate and process non-cognate amino acids such as alanine and cysteine, to avoid such errors it has two additional distinct editing activities against alanine. One activity is designated as 'pretransfer' editing and involves the tRNA(Pro)-independent hydrolysis of activated Ala-AMP. The other activity is designated 'posttransfer' editing and involves deacylation of mischarged Ala-tRNA(Pro). The misacylated Cys-tRNA(Pro) is not edited by ProRS. This chain is Proline--tRNA ligase, found in Prochlorococcus marinus (strain MIT 9301).